The following is a 405-amino-acid chain: S-adenosylmethionine synthase (405 aa).

H19 is an ATP binding site. Position 21 (D21) interacts with Mg(2+). E47 lines the K(+) pocket. Residues E60 and Q103 each coordinate L-methionine. The segment at 103 to 113 (QSADIAQGVDK) is flexible loop. ATP is bound by residues 179–181 (DGK), 246–247 (RF), D255, 261–262 (RK), A278, and K282. Residue D255 coordinates L-methionine. K286 serves as a coordination point for L-methionine.

It belongs to the AdoMet synthase family. As to quaternary structure, homotetramer; dimer of dimers. Mg(2+) serves as cofactor. K(+) is required as a cofactor.

Its subcellular location is the cytoplasm. The enzyme catalyses L-methionine + ATP + H2O = S-adenosyl-L-methionine + phosphate + diphosphate. It functions in the pathway amino-acid biosynthesis; S-adenosyl-L-methionine biosynthesis; S-adenosyl-L-methionine from L-methionine: step 1/1. Functionally, catalyzes the formation of S-adenosylmethionine (AdoMet) from methionine and ATP. The overall synthetic reaction is composed of two sequential steps, AdoMet formation and the subsequent tripolyphosphate hydrolysis which occurs prior to release of AdoMet from the enzyme. The polypeptide is S-adenosylmethionine synthase (Shouchella clausii (strain KSM-K16) (Alkalihalobacillus clausii)).